The primary structure comprises 209 residues: MEKSESTKIDVVETNKERKGKAPLLGKAPVVAAAVVHAKGGGAKRGIAIFDLILRIAAFASALGAAVAMATTEETLPFFTQFFQFEASYDDLPTFTFFVVAMAIVVAYLVLSVPFSIVCIVRPHAVVPRLLLIIFDTVIIALTTGAAGSSAAIVYLAHNGNQDANWLAICQQFGDFCQRVSGAVVAAFVTVVILIFLVVLSASALRRHH.

Topologically, residues 1-46 are cytoplasmic; sequence MEKSESTKIDVVETNKERKGKAPLLGKAPVVAAAVVHAKGGGAKRG. The helical transmembrane segment at 47–67 threads the bilayer; sequence IAIFDLILRIAAFASALGAAV. The Extracellular segment spans residues 68–96; that stretch reads AMATTEETLPFFTQFFQFEASYDDLPTFT. The chain crosses the membrane as a helical span at residues 97–117; the sequence is FFVVAMAIVVAYLVLSVPFSI. Residues 118-129 are Cytoplasmic-facing; it reads VCIVRPHAVVPR. Residues 130–150 form a helical membrane-spanning segment; it reads LLLIIFDTVIIALTTGAAGSS. The Extracellular segment spans residues 151–179; sequence AAIVYLAHNGNQDANWLAICQQFGDFCQR. A helical membrane pass occupies residues 180-200; it reads VSGAVVAAFVTVVILIFLVVL. At 201–209 the chain is on the cytoplasmic side; that stretch reads SASALRRHH.

The protein belongs to the Casparian strip membrane proteins (CASP) family. Homodimer and heterodimers.

The protein localises to the cell membrane. Regulates membrane-cell wall junctions and localized cell wall deposition. Required for establishment of the Casparian strip membrane domain (CSD) and the subsequent formation of Casparian strips, a cell wall modification of the root endodermis that determines an apoplastic barrier between the intraorganismal apoplasm and the extraorganismal apoplasm and prevents lateral diffusion. In Nicotiana tabacum (Common tobacco), this protein is Casparian strip membrane protein 1.